The primary structure comprises 635 residues: Allantoin permease (635 aa).

Residues 1 to 144 (MANDALSAIF…AGTGLQLGLN (144 aa)) are Cytoplasmic-facing. A helical transmembrane segment spans residues 145 to 165 (WWQCWLTVWIGYTFAGIFVVL). Topologically, residues 166-174 (NSRFGSAYH) are extracellular. A helical membrane pass occupies residues 175–195 (LSFPITVRASFGIFFSMWPII). The Cytoplasmic portion of the chain corresponds to 196–198 (NRV). Residues 199–219 (VMAIVWYAVQAWLGATPVALM) form a helical membrane-spanning segment. Residues 220–243 (LKSIFGKNLEDRIPNHFGSPNSTT) are Extracellular-facing. A helical transmembrane segment spans residues 244–264 (FEFMCFFIFWVVSIPFVLVAP). The Cytoplasmic portion of the chain corresponds to 265–269 (HKIRH). Residues 270-290 (LFTVKAALIPFAAFGFLIWAL) form a helical membrane-spanning segment. Topologically, residues 291–311 (KKSHGKIELGTLNDYSPHGSE) are extracellular. Residues 312 to 332 (FSWIFVRSLMACVANFAALII) traverse the membrane as a helical segment. At 333–351 (NAPDFGRFAKNPQASLWPQ) the chain is on the cytoplasmic side. A helical transmembrane segment spans residues 352–372 (LVAIPLFFAITCLIGIIVTAA). Over 373–401 (GYHLYGVNYWSPLDVLGQFLETTYTRGTR) the chain is Extracellular. Residues 402-422 (AGVFLISFVFALAQLGTNISA) traverse the membrane as a helical segment. The Cytoplasmic segment spans residues 423 to 443 (NSLACGADMTALFPRYINIRR). The chain crosses the membrane as a helical span at residues 444 to 464 (GSLFCVAMALCICPWNLMASS). Topologically, residues 465–466 (SK) are extracellular. Residues 467–487 (FTSALGAYAIFLSSIAGVICA) traverse the membrane as a helical segment. At 488 to 522 (DYFVVRRGYVKLTHLFLAQKGSFYMFGNKFGANWR) the chain is on the cytoplasmic side. The chain crosses the membrane as a helical span at residues 523–543 (AFVAYICGIAPNLPGFIGDVG). Residues 544 to 560 (APKITVSEGAMRLYYLG) are Extracellular-facing. The chain crosses the membrane as a helical span at residues 561–581 (YPVGFFISAVIYLILCYFFPV). Over 582–635 (PGTPVTNFLTEKGWFQRWAYVEDFEQDWKNELRRDDLCDDTVSIYDGTEEKIVY) the chain is Cytoplasmic.

It belongs to the purine-cytosine permease (2.A.39) family.

It localises to the membrane. Functionally, transport of allantoin. The sequence is that of Allantoin permease (DAL4) from Saccharomyces cerevisiae (strain ATCC 204508 / S288c) (Baker's yeast).